Reading from the N-terminus, the 570-residue chain is MDRSKRNSIAGFPPRVERLEEFEGGGGGDGNTVQVGRVSSSSYRAIISAFSRLTSLDDFTREKIGSGFFSEVFKVRHRASGQVMALKMNTLSSNRANLLKEMQLMNRLSHPNILRFMGVCVHQGQLHALTEYINSGNLEQLLDSDLYLPWTVRVKLAYDIAVGLSYLHFKGIFHRDLTSKNCLIKRDENGYSAVVADFGLAEKIPDASIGREKLAVVGSPFWMAPEVLRDEPYNEKADVFSYGIILCEIIARIQADPDYLPRTENFGLDYDAFQNMVGDCPSDFLQLTFNCCNMDPKLRPSFEEIGKTLKEIMSRLPEEELERDRKLQPTAKGPLEKVPGGKRLSSLDDKIPHKSPRPRRTIWLSRSQSDIFSHKPPRTVSVLDPYYQPRDGATHTPKVNPFSARQDLKGGKVKFFDLPSKSVISLVFDLDAPGPGSTTLADCQEPLAMSSRRWRSLPGSPEFLHQACPFMGCEESLSDGPPPRLSSLKYGVREIPPFRTSALSAASGHEAMDCSNPQEENGFGPRLKGTSLCTGAASEEMEVEEERPRRASVYFSISGISLQTQAKQDG.

A Protein kinase domain is found at 58-313; the sequence is DFTREKIGSG…EIGKTLKEIM (256 aa). ATP is bound by residues 64–72 and Lys87; that span reads IGSGFFSEV. Asp176 functions as the Proton acceptor in the catalytic mechanism. Residue Ser219 is modified to Phosphoserine; by autocatalysis. The span at 316–327 shows a compositional bias: basic and acidic residues; sequence LPEEELERDRKL. Residues 316–357 form a disordered region; that stretch reads LPEEELERDRKLQPTAKGPLEKVPGGKRLSSLDDKIPHKSPR. Phosphoserine occurs at positions 369, 456, and 460. The tract at residues 511-530 is disordered; sequence AMDCSNPQEENGFGPRLKGT.

This sequence belongs to the protein kinase superfamily. TKL Ser/Thr protein kinase family. Mg(2+) serves as cofactor. The cofactor is Mn(2+).

It is found in the nucleus. The catalysed reaction is L-seryl-[protein] + ATP = O-phospho-L-seryl-[protein] + ADP + H(+). It carries out the reaction L-threonyl-[protein] + ATP = O-phospho-L-threonyl-[protein] + ADP + H(+). The enzyme catalyses L-tyrosyl-[protein] + ATP = O-phospho-L-tyrosyl-[protein] + ADP + H(+). With respect to regulation, activated by autophosphorylation on Ser-219. Its function is as follows. Dual specificity protein kinase activity catalyzing autophosphorylation and phosphorylation of exogenous substrates on both serine/threonine and tyrosine residues. Phosphorylates cofilin at 'Ser-3'. May play an important role in spermatogenesis. The sequence is that of Dual specificity testis-specific protein kinase 2 (Tesk2) from Mus musculus (Mouse).